We begin with the raw amino-acid sequence, 584 residues long: uncharacterized protein (584 aa).

PbH1 repeat units lie at residues 100–128 (QENI…RSTH), 139–161 (CSNV…IVSP), 173–195 (SEQI…SITG), 196–225 (CDMV…DIEG), 236–266 (PINV…LIEG), 313–333 (TSDA…IDVR), 334–356 (GKSV…LVYQ), 357–382 (SSDV…GLRA), 406–427 (GGNM…WIAQ), 456–478 (NAGA…YCST), and 529–554 (SAGS…QTNT).

This is an uncharacterized protein from Bacillus subtilis (strain 168).